Consider the following 214-residue polypeptide: Probable transaldolase (214 aa).

The active-site Schiff-base intermediate with substrate is lysine 83.

Belongs to the transaldolase family. Type 3B subfamily.

Its subcellular location is the cytoplasm. The enzyme catalyses D-sedoheptulose 7-phosphate + D-glyceraldehyde 3-phosphate = D-erythrose 4-phosphate + beta-D-fructose 6-phosphate. It functions in the pathway carbohydrate degradation; pentose phosphate pathway; D-glyceraldehyde 3-phosphate and beta-D-fructose 6-phosphate from D-ribose 5-phosphate and D-xylulose 5-phosphate (non-oxidative stage): step 2/3. Functionally, transaldolase is important for the balance of metabolites in the pentose-phosphate pathway. In Geotalea daltonii (strain DSM 22248 / JCM 15807 / FRC-32) (Geobacter daltonii), this protein is Probable transaldolase.